A 143-amino-acid polypeptide reads, in one-letter code: Small ribosomal subunit protein uS12 (143 aa).

P62 is modified (hydroxyproline).

The protein belongs to the universal ribosomal protein uS12 family. Component of the 40S small ribosomal subunit.

The protein resides in the cytoplasm. The protein localises to the cytosol. Its subcellular location is the rough endoplasmic reticulum. The protein is Small ribosomal subunit protein uS12 (RPS23) of Ciona intestinalis (Transparent sea squirt).